The chain runs to 397 residues: Odorant receptor 85a (397 aa).

Over 1-46 (MIFKYIQEPVLGSLFRSRDSLIYLNRSIDQMGWRLPPRTKPYWWLY) the chain is Cytoplasmic. The helical transmembrane segment at 47–67 (YIWTLVVIVLVFIFIPYGLIM) threads the bilayer. Residues 68–83 (TGIKEFKNFTTTDLFT) are Extracellular-facing. Asn-75 carries N-linked (GlcNAc...) asparagine glycosylation. A helical transmembrane segment spans residues 84-104 (YVQVPVNTNASIMKGIIVLFM). The Cytoplasmic portion of the chain corresponds to 105-142 (RRRFSRAQKMMDAMDIRCTKMEEKVQVHRAAALCNRVV). Residues 143-163 (VIYHCIYFGYLSMALTGALVI) traverse the membrane as a helical segment. Over 164-192 (GKTPFCLYNPLVNPDDHFYLATAIESVTM) the chain is Extracellular. Residues 193 to 213 (AGIILANLILDVYPIIYVVVL) form a helical membrane-spanning segment. The Cytoplasmic segment spans residues 214 to 262 (RIHMELLSERIKTLRTDVEKGDDQHYAELVECVKDHKLIVEYGNTLRPM). A helical transmembrane segment spans residues 263–283 (ISATMFIQLLSVGLLLGLAAV). Over 284 to 294 (SMQFYNTVMER) the chain is Extracellular. A helical transmembrane segment spans residues 295–315 (VVSGVYTIAILSQTFPFCYVC). At 316–347 (EQLSSDCESLTNTLFHSKWIGAERRYRTTMLY) the chain is on the cytoplasmic side. Residues 348–368 (FIHNVQQSILFTAGGIFPICL) traverse the membrane as a helical segment. Over 369–397 (NTNIKMAKFAFSVVTIVNEMDLAEKLRRE) the chain is Extracellular.

The protein belongs to the insect chemoreceptor superfamily. Heteromeric odorant receptor channel (TC 1.A.69) family. Or2a subfamily. In terms of assembly, interacts with Orco. Complexes exist early in the endomembrane system in olfactory sensory neurons (OSNs), coupling these complexes to the conserved ciliary trafficking pathway. Expressed in olfactory sensory neurons in the antenna.

Its subcellular location is the cell membrane. Functionally, odorant receptor which mediates acceptance or avoidance behavior, depending on its substrates. The odorant receptor repertoire encodes a large collection of odor stimuli that vary widely in identity, intensity, and duration. May form a complex with Orco to form odorant-sensing units, providing sensitive and prolonged odorant signaling and calcium permeability. The sequence is that of Odorant receptor 85a (Or85a) from Drosophila melanogaster (Fruit fly).